Consider the following 292-residue polypeptide: MAITVTAKQVKELRDRTAAGMMDCKKALVEAEGDLELAIENMRKSGAVKAAKKAGRVAAEGVILAKVEGSVALLAEVNCETDFVAMDKSFLAFANKIAEIALANKVASVEALNELAYDGDTVEVARANLVSKIGENISIRRLHIVEGENLGAYVHSGKIGVISVLKGGDADLSKDIAMHVAAAAPQYVKAEDVPADVVAKEKEIQLAIAVESGKPEAIAEKMVAGRMAKFSGEVSLTSQPFIKDPSIKVAKLLKDAGAEVISFIRLEVGEGIDKKVEDFAAEVAATMAASAK.

The tract at residues 81–84 (TDFV) is involved in Mg(2+) ion dislocation from EF-Tu.

The protein belongs to the EF-Ts family.

It is found in the cytoplasm. In terms of biological role, associates with the EF-Tu.GDP complex and induces the exchange of GDP to GTP. It remains bound to the aminoacyl-tRNA.EF-Tu.GTP complex up to the GTP hydrolysis stage on the ribosome. In Psychromonas ingrahamii (strain DSM 17664 / CCUG 51855 / 37), this protein is Elongation factor Ts.